The sequence spans 236 residues: Small ribosomal subunit protein uS2c (236 aa).

It belongs to the universal ribosomal protein uS2 family.

It localises to the plastid. It is found in the chloroplast. The chain is Small ribosomal subunit protein uS2c (rps2) from Phaseolus vulgaris (Kidney bean).